The following is a 252-amino-acid chain: 3-dehydroquinate dehydratase (252 aa).

3-dehydroquinate-binding positions include Ser-21, 46–48 (EWR), and Arg-82. His-143 acts as the Proton donor/acceptor in catalysis. The active-site Schiff-base intermediate with substrate is Lys-170. The 3-dehydroquinate site is built by Arg-213, Ser-232, and Gln-236.

It belongs to the type-I 3-dehydroquinase family. In terms of assembly, homodimer.

It carries out the reaction 3-dehydroquinate = 3-dehydroshikimate + H2O. It functions in the pathway metabolic intermediate biosynthesis; chorismate biosynthesis; chorismate from D-erythrose 4-phosphate and phosphoenolpyruvate: step 3/7. Involved in the third step of the chorismate pathway, which leads to the biosynthesis of aromatic amino acids. Catalyzes the cis-dehydration of 3-dehydroquinate (DHQ) and introduces the first double bond of the aromatic ring to yield 3-dehydroshikimate. The protein is 3-dehydroquinate dehydratase of Salmonella paratyphi A (strain ATCC 9150 / SARB42).